A 209-amino-acid chain; its full sequence is uncharacterized protein (209 aa).

Residues 41–76 are a coiled coil; that stretch reads NVENLCLIRNKLKTDIENLLENKIDVENKLLVLRNQ.

This is an uncharacterized protein from Acanthamoeba polyphaga (Amoeba).